A 562-amino-acid polypeptide reads, in one-letter code: Protein wntless (562 aa).

The Cytoplasmic portion of the chain corresponds to 1 to 13; the sequence is MSGTILENLSGRK. A helical transmembrane segment spans residues 14–34; the sequence is LSILVASLLLCQVFCFLLGGL. Topologically, residues 35-239 are lumenal; the sequence is YAPLPAGHVT…AIHQNGGFTQ (205 aa). Residue N58 is glycosylated (N-linked (GlcNAc...) asparagine). Residues 240–260 traverse the membrane as a helical segment; it reads IWLMLKTVLFPFVVGIMIWFW. The Cytoplasmic portion of the chain corresponds to 261-270; sequence RRVHLLQRSP. The helical transmembrane segment at 271–291 threads the bilayer; it reads ALLEYMLIYLGGALTFLNLPL. At 292–311 the chain is on the lumenal side; the sequence is EYLSLVVEMPYMLLLSDIRQ. The helical transmembrane segment at 312–332 threads the bilayer; that stretch reads GIFYAMLLSFWLVFAGEHMLI. The Cytoplasmic segment spans residues 333 to 344; the sequence is QDAPNKSTIRSR. Residues 345 to 365 traverse the membrane as a helical segment; sequence YWKHLSAVVVGCISLFVFDIC. The Lumenal portion of the chain corresponds to 366-390; that stretch reads ERGVQLRNPFYSIWTTPLGAKVAMT. Residues 391 to 411 traverse the membrane as a helical segment; the sequence is FIILAGVSAAIYFLFLCYMIW. Over 412 to 441 the chain is Cytoplasmic; that stretch reads KVFRNIGDKRTSLPSMSQARRLHYEGLIYR. Residues 442-462 traverse the membrane as a helical segment; sequence FKFLMLATLLCAALTVAGFIM. Topologically, residues 463 to 482 are lumenal; that stretch reads GQMAEGQWQWNDNVEIQLTS. Residues 483 to 503 traverse the membrane as a helical segment; it reads AFLTGVYGMWNIYIFALLILY. At 504–562 the chain is on the cytoplasmic side; the sequence is APSHKQWPTMHHSDETTQSNENIVASAASEEIEFSHLPSDSNPSEISSLTSFTRKVAFD. Residues 539–562 are disordered; the sequence is HLPSDSNPSEISSLTSFTRKVAFD. Residues 541–556 are compositionally biased toward polar residues; that stretch reads PSDSNPSEISSLTSFT.

This sequence belongs to the wntless family. Interacts with wg; in the Golgi. Interacts with Vps35, a component of the retromer complex; wls stability is regulated by Vps35.

The protein localises to the presynaptic cell membrane. The protein resides in the postsynaptic cell membrane. It is found in the cell membrane. It localises to the endoplasmic reticulum membrane. Its subcellular location is the endosome membrane. The protein localises to the golgi apparatus membrane. Functionally, a segment polarity gene required for wingless (wg)-dependent patterning processes, acting in both wg-sending cells and wg-target cells. In non-neuronal cells wls directs wg secretion. The wls traffic loop encompasses the Golgi, the cell surface, an endocytic compartment and a retrograde route leading back to the Golgi, and involves clathrin-mediated endocytosis and the retromer complex (a conserved protein complex consisting of Vps35 and Vps26). In neuronal cells (the larval motorneuron NMJ), the wg signal moves across the synapse via the release of wls-containing exosome-like vesicles. Postsynaptic wls is required for the trafficking of fz2 through the fz2-interacting protein Grip. This Drosophila ananassae (Fruit fly) protein is Protein wntless.